The following is a 297-amino-acid chain: GTPase Era (297 aa).

The Era-type G domain maps to 7–174; that stretch reads HSGFVSIIGR…VQVVRDLLPE (168 aa). The interval 15–22 is G1; the sequence is GRPNVGKS. 15 to 22 provides a ligand contact to GTP; that stretch reads GRPNVGKS. Residues 41 to 45 are G2; the sequence is QTTRN. Residues 62 to 65 are G3; it reads DTPG. GTP contacts are provided by residues 62-66 and 124-127; these read DTPGI and NKVD. Residues 124-127 form a G4 region; it reads NKVD. The G5 stretch occupies residues 153–155; it reads VSA. A KH type-2 domain is found at 205–282; that stretch reads THDEVPYSVA…FLELFVRVSR (78 aa).

It belongs to the TRAFAC class TrmE-Era-EngA-EngB-Septin-like GTPase superfamily. Era GTPase family. In terms of assembly, monomer.

The protein resides in the cytoplasm. It is found in the cell inner membrane. An essential GTPase that binds both GDP and GTP, with rapid nucleotide exchange. Plays a role in 16S rRNA processing and 30S ribosomal subunit biogenesis and possibly also in cell cycle regulation and energy metabolism. In Geotalea daltonii (strain DSM 22248 / JCM 15807 / FRC-32) (Geobacter daltonii), this protein is GTPase Era.